The sequence spans 391 residues: uncharacterized protein (391 aa).

A helical membrane pass occupies residues 4–24 (FALIVGIVALAIFSFLYIQLY).

The protein localises to the membrane. This is an uncharacterized protein from Haemophilus influenzae (strain ATCC 51907 / DSM 11121 / KW20 / Rd).